The primary structure comprises 626 residues: Phosphomethylpyrimidine synthase (626 aa).

A disordered region spans residues 1-22 (MTKQEKAINLSESAQVDQQSVQ). The span at 10-22 (LSESAQVDQQSVQ) shows a compositional bias: polar residues. Substrate contacts are provided by residues Asn-232, Met-261, Tyr-290, His-326, 346-348 (SRG), 387-390 (DGLR), and Glu-426. His-430 is a Zn(2+) binding site. Tyr-453 is a binding site for substrate. His-494 provides a ligand contact to Zn(2+). Residues Cys-574, Cys-577, and Cys-582 each contribute to the [4Fe-4S] cluster site.

It belongs to the ThiC family. Homodimer. [4Fe-4S] cluster serves as cofactor.

The enzyme catalyses 5-amino-1-(5-phospho-beta-D-ribosyl)imidazole + S-adenosyl-L-methionine = 4-amino-2-methyl-5-(phosphooxymethyl)pyrimidine + CO + 5'-deoxyadenosine + formate + L-methionine + 3 H(+). Its pathway is cofactor biosynthesis; thiamine diphosphate biosynthesis. In terms of biological role, catalyzes the synthesis of the hydroxymethylpyrimidine phosphate (HMP-P) moiety of thiamine from aminoimidazole ribotide (AIR) in a radical S-adenosyl-L-methionine (SAM)-dependent reaction. The sequence is that of Phosphomethylpyrimidine synthase from Pseudomonas putida (strain ATCC 700007 / DSM 6899 / JCM 31910 / BCRC 17059 / LMG 24140 / F1).